The sequence spans 129 residues: Profilin-4 (129 aa).

It belongs to the profilin family. Expressed in testis, in seminiferous tubules (at protein level). Expressed in spermatocytes and spermatids, but not in spermatogonium.

Its subcellular location is the cytoplasm. Involved in male fertility. Required for manchette development and acrosome biogenesis during spermiogenesis. Binds in vitro to phospholipids, including phosphatidylinositol 3-phosphate (PtdIns(3)P), phosphatidylinositol 4,5-bisphosphate (PtdIns(4,5)P2), phosphatidylinositol 4-phosphate (PtdIns(4)P) and phosphatidic acid (PA). Contrary to other profilin family members, does not bind to actin in vitro. The chain is Profilin-4 (Pfn4) from Rattus norvegicus (Rat).